Here is a 182-residue protein sequence, read N- to C-terminus: T-cell surface glycoprotein CD3 gamma chain (182 aa).

The N-terminal stretch at Met1 to Ala22 is a signal peptide. Residues Gln23 to Ser116 lie on the Extracellular side of the membrane. Residues Gln37–Ser94 enclose the Ig-like domain. A disulfide bridge connects residues Cys46 and Cys87. N-linked (GlcNAc...) asparagine glycans are attached at residues Asn52 and Asn92. Residues Gly117–Ala137 form a helical membrane-spanning segment. Residues Gly138 to Asn182 lie on the Cytoplasmic side of the membrane. Ser145 bears the Phosphoserine mark. Ser148 carries the phosphoserine; by PKC modification. One can recognise an ITAM domain in the interval Asp149–Asn177. A Di-leucine motif motif is present at residues Leu153–Leu154.

As to quaternary structure, the TCR-CD3 complex is composed of a CD3D/CD3E and a CD3G/CD3E heterodimers that preferentially associate with TCRalpha and TCRbeta, respectively, to form TCRalpha/CD3E/CD3G and TCRbeta/CD3G/CD3E trimers. In turn, the hexamer interacts with CD3Z homodimer to form the TCR-CD3 complex. Alternatively, TCRalpha and TCRbeta can be replaced by TCRgamma and TCRdelta. Phosphorylated on Tyr residues after T-cell receptor triggering by LCK in association with CD4/CD8. Phosphorylated also by PKC; leading to the TCR complex down-regulation. In terms of processing, phosphorylated on Tyr residues after T-cell receptor triggering by LCK in association with CD4/CD8.

Its subcellular location is the cell membrane. Its function is as follows. Part of the TCR-CD3 complex present on T-lymphocyte cell surface that plays an essential role in adaptive immune response. When antigen presenting cells (APCs) activate T-cell receptor (TCR), TCR-mediated signals are transmitted across the cell membrane by the CD3 chains CD3D, CD3E, CD3G and CD3Z. All CD3 chains contain immunoreceptor tyrosine-based activation motifs (ITAMs) in their cytoplasmic domain. Upon TCR engagement, these motifs become phosphorylated by Src family protein tyrosine kinases LCK and FYN, resulting in the activation of downstream signaling pathways. In addition to this role of signal transduction in T-cell activation, CD3G plays an essential role in the dynamic regulation of TCR expression at the cell surface. Indeed, constitutive TCR cycling is dependent on the di-leucine-based (diL) receptor-sorting motif present in CD3G. In Homo sapiens (Human), this protein is T-cell surface glycoprotein CD3 gamma chain (CD3G).